The chain runs to 295 residues: Cytidine deaminase (295 aa).

CMP/dCMP-type deaminase domains follow at residues 48–168 (SDKE…FGPA) and 187–295 (DDKD…FVNV). 89–91 (NME) serves as a coordination point for substrate. H102 lines the Zn(2+) pocket. The active-site Proton donor is the E104. Residues C129 and C132 each coordinate Zn(2+).

This sequence belongs to the cytidine and deoxycytidylate deaminase family. In terms of assembly, homodimer. Zn(2+) serves as cofactor.

It carries out the reaction cytidine + H2O + H(+) = uridine + NH4(+). The catalysed reaction is 2'-deoxycytidine + H2O + H(+) = 2'-deoxyuridine + NH4(+). This enzyme scavenges exogenous and endogenous cytidine and 2'-deoxycytidine for UMP synthesis. The protein is Cytidine deaminase of Vibrio parahaemolyticus serotype O3:K6 (strain RIMD 2210633).